A 564-amino-acid chain; its full sequence is Cysteine--tRNA ligase CPS1, chloroplastic/mitochondrial (564 aa).

A chloroplast and mitochondrion-targeting transit peptide spans 1–43; it reads MAAAVVVRRAAGLIPLLSSRFGARMPLHRALSQIPPPRFCRLL. Residue cysteine 93 participates in Zn(2+) binding. Positions 95–105 match the 'HIGH' region motif; the sequence is VTPYDDSHIGH. Positions 273, 298, and 302 each coordinate Zn(2+). A 'KMSKS' region motif is present at residues 330–334; the sequence is KMSKS. Lysine 333 lines the ATP pocket.

This sequence belongs to the class-I aminoacyl-tRNA synthetase family. The cofactor is Zn(2+).

The protein localises to the plastid. It is found in the chloroplast. Its subcellular location is the mitochondrion. The enzyme catalyses tRNA(Cys) + L-cysteine + ATP = L-cysteinyl-tRNA(Cys) + AMP + diphosphate. Its function is as follows. Nuclear genome-encoded factor required for normal assembly of chloroplast polysomes. The protein is Cysteine--tRNA ligase CPS1, chloroplastic/mitochondrial of Zea mays (Maize).